A 299-amino-acid polypeptide reads, in one-letter code: NmrA-like family domain-containing protein 1 (299 aa).

Residues 11 to 16 (GATGAQ), 37 to 41 (RDPGQ), 58 to 59 (DQ), 79 to 81 (TNY), Lys92, Lys133, and 155 to 158 (YFEN) each bind NADP(+). Positions 153 to 189 (PCYFENLLSYFLPQKAPDGRSYLLSLPMGDVPIDGMS) are interaction with ASS1.

Belongs to the NmrA-type oxidoreductase family. As to quaternary structure, homodimer. Interacts with ASS1. Interaction is enhanced by low NADPH/NADP(+) ratios, which results in inhibition of ASS1 activity.

It is found in the cytoplasm. It localises to the perinuclear region. The protein localises to the nucleus. In terms of biological role, redox sensor protein. Undergoes restructuring and subcellular redistribution in response to changes in intracellular NADPH/NADP(+) levels. At low NADPH concentrations the protein is found mainly as a monomer, and binds argininosuccinate synthase (ASS1), the enzyme involved in nitric oxide synthesis. Association with ASS1 impairs its activity and reduces the production of nitric oxide, which subsecuently prevents apoptosis. Under normal NADPH concentrations, the protein is found as a dimer and hides the binding site for ASS1. The homodimer binds one molecule of NADPH. Has higher affinity for NADPH than for NADP(+). Binding to NADPH is necessary to form a stable dimer. This is NmrA-like family domain-containing protein 1 (NMRAL1) from Bos taurus (Bovine).